Consider the following 127-residue polypeptide: Large ribosomal subunit protein bL12 (127 aa).

The protein belongs to the bacterial ribosomal protein bL12 family. As to quaternary structure, homodimer. Part of the ribosomal stalk of the 50S ribosomal subunit. Forms a multimeric L10(L12)X complex, where L10 forms an elongated spine to which 2 to 4 L12 dimers bind in a sequential fashion. Binds GTP-bound translation factors.

In terms of biological role, forms part of the ribosomal stalk which helps the ribosome interact with GTP-bound translation factors. Is thus essential for accurate translation. In Streptococcus thermophilus (strain CNRZ 1066), this protein is Large ribosomal subunit protein bL12.